Reading from the N-terminus, the 316-residue chain is 4-hydroxy-3-methylbut-2-enyl diphosphate reductase (316 aa).

Cys12 serves as a coordination point for [4Fe-4S] cluster. (2E)-4-hydroxy-3-methylbut-2-enyl diphosphate is bound by residues His41 and His74. His41 and His74 together coordinate dimethylallyl diphosphate. Residues His41 and His74 each contribute to the isopentenyl diphosphate site. Residue Cys96 coordinates [4Fe-4S] cluster. His124 provides a ligand contact to (2E)-4-hydroxy-3-methylbut-2-enyl diphosphate. His124 serves as a coordination point for dimethylallyl diphosphate. His124 contributes to the isopentenyl diphosphate binding site. The Proton donor role is filled by Glu126. Thr167 serves as a coordination point for (2E)-4-hydroxy-3-methylbut-2-enyl diphosphate. Residue Cys197 participates in [4Fe-4S] cluster binding. Residues Ser225, Ser226, Asn227, and Ser269 each coordinate (2E)-4-hydroxy-3-methylbut-2-enyl diphosphate. The dimethylallyl diphosphate site is built by Ser225, Ser226, Asn227, and Ser269. Isopentenyl diphosphate contacts are provided by Ser225, Ser226, Asn227, and Ser269.

This sequence belongs to the IspH family. In terms of assembly, homodimer. [4Fe-4S] cluster is required as a cofactor.

The enzyme catalyses isopentenyl diphosphate + 2 oxidized [2Fe-2S]-[ferredoxin] + H2O = (2E)-4-hydroxy-3-methylbut-2-enyl diphosphate + 2 reduced [2Fe-2S]-[ferredoxin] + 2 H(+). It carries out the reaction dimethylallyl diphosphate + 2 oxidized [2Fe-2S]-[ferredoxin] + H2O = (2E)-4-hydroxy-3-methylbut-2-enyl diphosphate + 2 reduced [2Fe-2S]-[ferredoxin] + 2 H(+). It participates in isoprenoid biosynthesis; dimethylallyl diphosphate biosynthesis; dimethylallyl diphosphate from (2E)-4-hydroxy-3-methylbutenyl diphosphate: step 1/1. The protein operates within isoprenoid biosynthesis; isopentenyl diphosphate biosynthesis via DXP pathway; isopentenyl diphosphate from 1-deoxy-D-xylulose 5-phosphate: step 6/6. In terms of biological role, catalyzes the conversion of 1-hydroxy-2-methyl-2-(E)-butenyl 4-diphosphate (HMBPP) into a mixture of isopentenyl diphosphate (IPP) and dimethylallyl diphosphate (DMAPP). Acts in the terminal step of the DOXP/MEP pathway for isoprenoid precursor biosynthesis. In Enterobacter sp. (strain 638), this protein is 4-hydroxy-3-methylbut-2-enyl diphosphate reductase.